The sequence spans 403 residues: Zinc finger HIT domain-containing protein 2 (403 aa).

M1 is modified (N-acetylmethionine). The Zn(2+) site is built by C7, C10, C22, C25, C30, C34, H38, and C41. The HIT-type zinc finger occupies 7 to 41 (CGFCPAGEVQPARYTCPRCNAPYCSLRCYRTHGTC). The tract at residues 72 to 98 (RQQRETEDEPGEAGLSSGPAPGGLSGL) is disordered. T161 carries the phosphothreonine modification.

As to quaternary structure, interacts (via HIT-type zinc finger) with RUVBL2 in the presence of ATP or ADP; shows a stronger interaction in the presence of ADP. In terms of tissue distribution, low expression in most tissues; highly expressed in testis.

May act as a bridging factor mediating the interaction between the R2TP/Prefoldin-like (R2TP/PFDL) complex and U5 small nuclear ribonucleoprotein (U5 snRNP). Required for the interaction of R2TP complex subunit RPAP3 and prefoldin-like subunit URI1 with U5 snRNP proteins EFTUD2 and PRPF8. May play a role in regulating the composition of the U5 snRNP complex. This chain is Zinc finger HIT domain-containing protein 2 (ZNHIT2), found in Homo sapiens (Human).